The sequence spans 277 residues: Putative hydro-lyase SCO1412 (277 aa).

It belongs to the D-glutamate cyclase family.

The polypeptide is Putative hydro-lyase SCO1412 (Streptomyces coelicolor (strain ATCC BAA-471 / A3(2) / M145)).